The primary structure comprises 149 residues: CyanoQ (149 aa).

An N-terminal signal peptide occupies residues 1–21 (MSRLRSLLSLILVLVTTVLVS). A lipid anchor (N-palmitoyl cysteine) is attached at cysteine 22. Cysteine 22 carries the S-diacylglycerol cysteine lipid modification.

It belongs to the PsbQ family. CyanoQ subfamily. As to quaternary structure, PSII is composed of 1 copy each of membrane proteins PsbA, PsbB, PsbC, PsbD, PsbE, PsbF, PsbH, PsbI, PsbJ, PsbK, PsbL, PsbM, PsbT, PsbX, PsbY, PsbZ, Psb30/Ycf12, peripheral proteins PsbO, CyanoQ (PsbQ), PsbU, PsbV and a large number of cofactors. It forms dimeric complexes. Pull-down experiments with His-tagged PsbQ pull down dimeric, but not monomeric, PSII. Post-translationally, the N-terminus is blocked. Upon expression in E.coli the N-terminus is modified with a diacylglycerol and an acyl group bound to two palmitates and one palmitoleate.

It is found in the cellular thylakoid membrane. Functionally, one of the extrinsic, lumenal subunits of photosystem II (PSII), which stabilize and protect the oxygen-evolving complex. PSII is a light-driven water plastoquinone oxidoreductase, using light energy to abstract electrons from H(2)O, generating a proton gradient subsequently used for ATP formation. Plays a role in the stability of the oxygen-evolving center on the luminal side of PSII. Required for optimal photoautotrophic growth in the absence of Ca(2+) or Cl(-), functions in optimizing PSII water oxidation/O(2) evolving activity. Requires PsbO to bind to PSII. This Synechocystis sp. (strain ATCC 27184 / PCC 6803 / Kazusa) protein is CyanoQ.